Consider the following 479-residue polypeptide: Ribosomal RNA small subunit methyltransferase F (479 aa).

Residues 125–131, Glu149, Asp176, and Asp194 contribute to the S-adenosyl-L-methionine site; that span reads AAAPGSK. The active-site Nucleophile is Cys247.

This sequence belongs to the class I-like SAM-binding methyltransferase superfamily. RsmB/NOP family.

The protein localises to the cytoplasm. The catalysed reaction is cytidine(1407) in 16S rRNA + S-adenosyl-L-methionine = 5-methylcytidine(1407) in 16S rRNA + S-adenosyl-L-homocysteine + H(+). In terms of biological role, specifically methylates the cytosine at position 1407 (m5C1407) of 16S rRNA. The sequence is that of Ribosomal RNA small subunit methyltransferase F from Escherichia coli (strain SMS-3-5 / SECEC).